Reading from the N-terminus, the 57-residue chain is Large ribosomal subunit protein bL32c (57 aa).

This sequence belongs to the bacterial ribosomal protein bL32 family.

It is found in the plastid. It localises to the chloroplast. This chain is Large ribosomal subunit protein bL32c, found in Vitis vinifera (Grape).